Reading from the N-terminus, the 404-residue chain is Serine/threonine transporter SstT (404 aa).

A run of 9 helical transmembrane segments spans residues 17–37 (IGIGVVIGLLLGILLPDVTAI), 44–64 (FVGALKAIAPLLVFALVVQAI), 75–95 (MTLIIVLYLLGTFLAALVAVI), 138–158 (ALATANYIGVLAWALIFGLAL), 179–199 (IVVWIINVAPIGIMGLVFSTV), 212–232 (LLILVLVGTMLFVALVVNPLL), 287–307 (IPLGAMINMGGAAITINVLTL), 319–339 (FLTALLLSVVAAISACGASGV), and 354–374 (FGISSDLAMQVVGVGFIVGVI).

This sequence belongs to the dicarboxylate/amino acid:cation symporter (DAACS) (TC 2.A.23) family.

The protein localises to the cell membrane. It catalyses the reaction L-serine(in) + Na(+)(in) = L-serine(out) + Na(+)(out). The catalysed reaction is L-threonine(in) + Na(+)(in) = L-threonine(out) + Na(+)(out). In terms of biological role, involved in the import of serine and threonine into the cell, with the concomitant import of sodium (symport system). The sequence is that of Serine/threonine transporter SstT from Streptococcus equi subsp. zooepidemicus (strain H70).